Reading from the N-terminus, the 129-residue chain is Phosphoribosyl-AMP cyclohydrolase (129 aa).

Aspartate 85 is a Mg(2+) binding site. A Zn(2+)-binding site is contributed by cysteine 86. Mg(2+) contacts are provided by aspartate 87 and aspartate 89. Cysteine 102 and cysteine 109 together coordinate Zn(2+).

The protein belongs to the PRA-CH family. Homodimer. The cofactor is Mg(2+). Zn(2+) is required as a cofactor.

The protein resides in the cytoplasm. The enzyme catalyses 1-(5-phospho-beta-D-ribosyl)-5'-AMP + H2O = 1-(5-phospho-beta-D-ribosyl)-5-[(5-phospho-beta-D-ribosylamino)methylideneamino]imidazole-4-carboxamide. It functions in the pathway amino-acid biosynthesis; L-histidine biosynthesis; L-histidine from 5-phospho-alpha-D-ribose 1-diphosphate: step 3/9. Functionally, catalyzes the hydrolysis of the adenine ring of phosphoribosyl-AMP. The chain is Phosphoribosyl-AMP cyclohydrolase from Methanococcus maripaludis (strain C7 / ATCC BAA-1331).